The primary structure comprises 120 residues: uncharacterized protein (120 aa).

This is an uncharacterized protein from Dictyostelium discoideum (Social amoeba).